The sequence spans 106 residues: Defensin-like protein 1 (106 aa).

An N-terminal signal peptide occupies residues 1–25 (MARSLCFMAFAVLAMMLFVAYEVQA). 4 disulfides stabilise this stretch: cysteine 29–cysteine 73, cysteine 40–cysteine 60, cysteine 46–cysteine 67, and cysteine 50–cysteine 69.

Belongs to the DEFL family.

The protein localises to the secreted. It is found in the vacuole. The polypeptide is Defensin-like protein 1 (THIO1) (Nicotiana paniculata).